Reading from the N-terminus, the 324-residue chain is MIRSVMCGVGSALPKKKLSNDEIAKFVETSDSWIVQRTGIHQRYIASENETTVSLGIEAAQVALTNAGMTIKDIDCIILATSTPNRTFPSSAVEIQHALGMSHGFSFDVQAVCSGFIFALTIGDVYLRSGEAKRVLVIGSETFSRILDWKDRTTCVLFGDGAGAAILEAREVEGNVAIDRGILSTKLRSNGAHIDKLYADGGPSTTQTIGYLRMKGQEVFKHAVGIVTDVIDDCFAAVGMNPSQLDWFVPHQANKRIIEASAKKLGIKTDKVVITVDQHGNTSAASVPLALATAVQDGRIKEGDLVLLEAMGGGFTWGAVLIRW.

Active-site residues include Cys-113 and His-251. The ACP-binding stretch occupies residues 252–256 (QANKR). Residue Asn-281 is part of the active site.

The protein belongs to the thiolase-like superfamily. FabH family. In terms of assembly, homodimer.

It localises to the cytoplasm. The enzyme catalyses malonyl-[ACP] + acetyl-CoA + H(+) = 3-oxobutanoyl-[ACP] + CO2 + CoA. It participates in lipid metabolism; fatty acid biosynthesis. Its function is as follows. Catalyzes the condensation reaction of fatty acid synthesis by the addition to an acyl acceptor of two carbons from malonyl-ACP. Catalyzes the first condensation reaction which initiates fatty acid synthesis and may therefore play a role in governing the total rate of fatty acid production. Possesses both acetoacetyl-ACP synthase and acetyl transacylase activities. Its substrate specificity determines the biosynthesis of branched-chain and/or straight-chain of fatty acids. In Bartonella bacilliformis (strain ATCC 35685 / KC583 / Herrer 020/F12,63), this protein is Beta-ketoacyl-[acyl-carrier-protein] synthase III.